The primary structure comprises 235 residues: Uracil-DNA glycosylase (235 aa).

The Proton acceptor role is filled by Asp71.

This sequence belongs to the uracil-DNA glycosylase (UDG) superfamily. UNG family.

Its subcellular location is the cytoplasm. The enzyme catalyses Hydrolyzes single-stranded DNA or mismatched double-stranded DNA and polynucleotides, releasing free uracil.. Excises uracil residues from the DNA which can arise as a result of misincorporation of dUMP residues by DNA polymerase or due to deamination of cytosine. In Campylobacter hominis (strain ATCC BAA-381 / DSM 21671 / CCUG 45161 / LMG 19568 / NCTC 13146 / CH001A), this protein is Uracil-DNA glycosylase.